We begin with the raw amino-acid sequence, 930 residues long: uncharacterized protein (930 aa).

Positions 434 to 441 match the Nuclear localization signal motif; sequence IRRGISRK.

It is found in the nucleus. This is an uncharacterized protein from Chaetomium thermophilum (strain DSM 1495 / CBS 144.50 / IMI 039719) (Thermochaetoides thermophila).